A 65-amino-acid chain; its full sequence is MAKGKDVRLVITLECTNCSQNPNKRFSGISRYTTSKNRRNTTNRLELKKFCPQCSVHTIHKEIKK.

This sequence belongs to the bacterial ribosomal protein bL33 family.

It is found in the plastid. The protein localises to the chloroplast. This chain is Large ribosomal subunit protein bL33c, found in Chaetosphaeridium globosum (Charophycean green alga).